The chain runs to 63 residues: Large ribosomal subunit protein uL29 (63 aa).

It belongs to the universal ribosomal protein uL29 family.

The protein is Large ribosomal subunit protein uL29 of Caulobacter vibrioides (strain ATCC 19089 / CIP 103742 / CB 15) (Caulobacter crescentus).